A 257-amino-acid polypeptide reads, in one-letter code: AA9 family lytic polysaccharide monooxygenase U (257 aa).

A signal peptide spans 1–19 (MKLYLAAFLGAVATPGAFA). Cu(2+) is bound at residue His-20. N-linked (GlcNAc...) asparagine glycans are attached at residues Asn-29 and Asn-71. Cys-74 and Cys-194 are disulfide-bonded. Cu(2+) is bound at residue His-113. An N-linked (GlcNAc...) asparagine glycan is attached at Asn-161. Gln-189 lines the O2 pocket. Residue Tyr-191 coordinates Cu(2+).

Belongs to the polysaccharide monooxygenase AA9 family. Cu(2+) is required as a cofactor.

It is found in the secreted. The catalysed reaction is [(1-&gt;4)-beta-D-glucosyl]n+m + reduced acceptor + O2 = 4-dehydro-beta-D-glucosyl-[(1-&gt;4)-beta-D-glucosyl]n-1 + [(1-&gt;4)-beta-D-glucosyl]m + acceptor + H2O.. Functionally, lytic polysaccharide monooxygenase (LPMO) that depolymerizes crystalline and amorphous polysaccharides via the oxidation of scissile alpha- or beta-(1-4)-glycosidic bonds, yielding C1 and C4 oxidation products. Catalysis by LPMOs requires the reduction of the active-site copper from Cu(II) to Cu(I) by a reducing agent and H(2)O(2) or O(2) as a cosubstrate. Shows no activity on wheat arabinoxylan, konjac glucomannan, acetylated spruce galactoglucomannan, or cellopentaose. The polypeptide is AA9 family lytic polysaccharide monooxygenase U (Thermothielavioides terrestris (strain ATCC 38088 / NRRL 8126) (Thielavia terrestris)).